Reading from the N-terminus, the 684-residue chain is Amino-acid acetyltransferase, mitochondrial (684 aa).

The interval 414 to 439 (PQDATNSASEPRDPSQLSTVATRRKR) is disordered. Residues 415–434 (QDATNSASEPRDPSQLSTVA) show a composition bias toward polar residues. An N-acetyltransferase domain is found at 505 to 674 (GKSRMTLNDP…YEGVCRGIEP (170 aa)).

This sequence belongs to the acetyltransferase family.

The protein localises to the mitochondrion. The enzyme catalyses L-glutamate + acetyl-CoA = N-acetyl-L-glutamate + CoA + H(+). It participates in amino-acid biosynthesis; L-arginine biosynthesis; N(2)-acetyl-L-ornithine from L-glutamate: step 1/4. Its function is as follows. N-acetylglutamate synthase involved in arginine biosynthesis. The chain is Amino-acid acetyltransferase, mitochondrial (ARG2) from Ajellomyces capsulatus (strain NAm1 / WU24) (Darling's disease fungus).